We begin with the raw amino-acid sequence, 630 residues long: Probable potassium transport system protein Kup (630 aa).

12 helical membrane passes run 17 to 37 (LAIA…LYSL), 51 to 71 (PSAI…VVGI), 105 to 125 (ITGL…GDAV), 144 to 164 (PQLS…LFWI), 175 to 195 (LFGP…IYHI), 218 to 238 (VLLA…AEAL), 255 to 275 (YVLV…LLLL), 283 to 303 (PFFL…STVA), 344 to 364 (IYVP…VIGF), 374 to 394 (YGIA…VVMV), 402 to 422 (LLVA…FGAN), and 428 to 448 (QGGW…MTWY).

This sequence belongs to the HAK/KUP transporter (TC 2.A.72) family.

It localises to the cell inner membrane. The enzyme catalyses K(+)(in) + H(+)(in) = K(+)(out) + H(+)(out). Its function is as follows. Transport of potassium into the cell. Likely operates as a K(+):H(+) symporter. The sequence is that of Probable potassium transport system protein Kup from Burkholderia pseudomallei (strain 1710b).